The following is a 292-amino-acid chain: Acetylglutamate kinase (292 aa).

Substrate-binding positions include Gly64–Gly65, Arg86, and Asn190.

It belongs to the acetylglutamate kinase family. ArgB subfamily.

It localises to the cytoplasm. The catalysed reaction is N-acetyl-L-glutamate + ATP = N-acetyl-L-glutamyl 5-phosphate + ADP. The protein operates within amino-acid biosynthesis; L-arginine biosynthesis; N(2)-acetyl-L-ornithine from L-glutamate: step 2/4. Functionally, catalyzes the ATP-dependent phosphorylation of N-acetyl-L-glutamate. The polypeptide is Acetylglutamate kinase (Citrifermentans bemidjiense (strain ATCC BAA-1014 / DSM 16622 / JCM 12645 / Bem) (Geobacter bemidjiensis)).